Reading from the N-terminus, the 160-residue chain is Transcription elongation factor GreA (160 aa).

A coiled-coil region spans residues 10-37; the sequence is TLDGKAKLENELQELKTVKRKEVVERIK.

Belongs to the GreA/GreB family.

Necessary for efficient RNA polymerase transcription elongation past template-encoded arresting sites. The arresting sites in DNA have the property of trapping a certain fraction of elongating RNA polymerases that pass through, resulting in locked ternary complexes. Cleavage of the nascent transcript by cleavage factors such as GreA or GreB allows the resumption of elongation from the new 3'terminus. GreA releases sequences of 2 to 3 nucleotides. The sequence is that of Transcription elongation factor GreA from Listeria innocua serovar 6a (strain ATCC BAA-680 / CLIP 11262).